A 1459-amino-acid chain; its full sequence is MGRYSVSPVPKCLLLMFLGWSGLKYYEVNAAQLREYHIAAQLEDWDYNPQPEELSRLSESDLTFKKIVYREYELDFKQEKPRDELSGLLGPTLRGEVGDILIIYFKNFATQPVSIHPQSAVYNKWSEGSSYSDGTSDVERLDDAVPPGQSFKYVWNITAEIGPKKADPPCLTYAYYSHVNMVRDFNSGLIGALLICKEGSLNANGSQKFFNREYVLMFSVFDESKNWYRKPSLQYTINGFANGTLPDVQACAYDHISWHLIGMSSSPEIFSVHFNGQTLEQNHYKVSTINLVGGASVTANMSVSRTGKWLISSLVAKHLQAGMYGYLNIKDCGNPDTLTRKLSFRELRRIMNWEYFIAAEEITWDYAPEIPSSVDRRYKAQYLDNFSNFIGKKYKKAVFRQYKDSNFTKPTYAIWPKERGILGPVIRAKVRDTISIVFKNLASRPYSIYVHGVSVSKDAEGAIYPSDPKENITHGKAVEPGQVYTYKWTVLDTDEPTVKDSECITKLYHSAVDMTRDIASGLIGPLLVCKHKALSVKGVQNKADVEQHAVFAVFDENKSWYLEDNIKKYCSNPSTVKKDDPKFYKSNVMYTLNGYASDRTEVLGFHQSEVVEWHLTSVGTVDEIVPVHLSGHTFLSKGKHQDILNLFPMSGESATVTMDNLGTWLLSSWGSCEMSNGMRLRFLDANYDDEDEGNEEEEEDDGDIFADIFIPPEVVKKKEKDPVNFVSDPESDKIAKELGLLDDEDNQEESHNVQTEDDEEQLMIATMLGFRSFKGSVAEEELNLTALALEEDAHASDPRIDSNSARNPDDIAGRYLRTINRGNKRRYYIAAEEVLWDYSPIGKSQVRSRAAKTTFKKAIFRSYLDDTFQTPSTGGEYEKHLGILGPIIRAEVDDVIEVQFRNLASRPYSLHAHGLLYEKSSEGRSYDDKSPELFKKDDAIMPNGTYTYVWQVPPRSGPTDNTEKCKSWAYYSGVNPEKDIHSGLIGPILICQKGMIDKYNRTIDIREFVLFFMVFDEEKSWYFPKSDKSTRAEKLIGVQSRHTFPAINGIPYQLQGLTMYKDENVHWHLLNMGGPKDIHVVNFHGQTFTEEGREDNQLGVLPLLPGTFASIKMKPSKIGTWLLETEVGENQERGMQALFTVIDKDCKLPMGLASGIIQDSQISASGHVGYWEPKLARLNNTGKYNAWSIIKKEHEHPWIQIDLQRQVVITGIQTQGAMQLLKHLYTVEYFFTYSKDGQNWITFKGRHSETQMHFEGNSDGTTVKENHIDPPIIARYIRLHPTKFHNRPTFRIELLGCEVEGCSVPLGMESGAIKNSEITASSYKKTWWSSWEPSLARLNLKGRTNAWQPKVNNKDQWLQIDLQHLTKITSIITQGATSMTTSMYVKTFSIHYTDDNSTWKPYLDVRTSMEKVFTGNINSDGHVKHFFKPPILSRFIRIIPKTWNQYIALRIELFGCEVF.

A signal peptide spans 1-30 (MGRYSVSPVPKCLLLMFLGWSGLKYYEVNA). One can recognise a Plastocyanin-like 1 domain in the interval 32 to 196 (QLREYHIAAQ…SGLIGALLIC (165 aa)). F5/8 type A domains are found at residues 32–330 (QLRE…LNIK) and 351–685 (MNWE…FLDA). Positions 142 and 143 each coordinate Ca(2+). Asn-156 is a glycosylation site (N-linked (GlcNAc...) asparagine). Cys-170 and Cys-196 are joined by a disulfide. Residues Asn-204, Asn-242, Asn-300, Asn-385, Asn-406, and Asn-471 are each glycosylated (N-linked (GlcNAc...) asparagine). 3 consecutive Plastocyanin-like domains span residues 206–330 (SQKF…LNIK), 351–529 (MNWE…LLVC), and 539–685 (VQNK…FLDA). Cys-251 and Cys-332 are disulfide-bonded. Cys-503 and Cys-529 are joined by a disulfide. N-linked (GlcNAc...) asparagine glycosylation occurs at Asn-557. The b stretch occupies residues 693-817 (GNEEEEEDDG…PDDIAGRYLR (125 aa)). Residues 739-758 (GLLDDEDNQEESHNVQTEDD) form a disordered region. A propeptide spans 772–817 (SFKGSVAEEELNLTALALEEDAHASDPRIDSNSARNPDDIAGRYLR) (activation peptide (connecting region)). Asn-783 and Asn-943 each carry an N-linked (GlcNAc...) asparagine glycan. 2 consecutive Plastocyanin-like domains span residues 823 to 991 (NKRR…ILIC) and 1000 to 1142 (NRTI…FTVI). One can recognise an F5/8 type A 3 domain in the interval 823–1142 (NKRRYYIAAE…RGMQALFTVI (320 aa)). Residues Cys-965 and Cys-991 are joined by a disulfide bond. N-linked (GlcNAc...) asparagine glycosylation is found at Asn-1000, Asn-1179, and Asn-1396. Disulfide bonds link Cys-1146/Cys-1297 and Cys-1302/Cys-1456. F5/8 type C domains are found at residues 1146-1297 (CKLP…LLGC) and 1302-1456 (CSVP…LFGC).

The protein belongs to the multicopper oxidase family. Heterodimer of a light and a heavy chains; non-disulfide-linked. The interaction between the two chains is calcium-dependent. Thrombin activates factor V proteolytically to the active cofactor, factor Va (formation of a heavy chain at the N-terminus and a light chain at the C-terminus). In terms of processing, activated protein C inactivates factor V and factor Va by proteolytic degradation. Plasma; synthesized in the liver.

The protein resides in the secreted. Functionally, central regulator of hemostasis. It serves as a critical cofactor for the prothrombinase activity of factor Xa that results in the activation of prothrombin to thrombin. This chain is Coagulation factor V (F5), found in Pseudonaja textilis (Eastern brown snake).